The chain runs to 520 residues: Cryptochrome DASH (520 aa).

The region spanning 5–141 (RTVICLLRND…RVQTFWGSTL (137 aa)) is the Photolyase/cryptochrome alpha/beta domain. The disordered stretch occupies residues 479-504 (SRHVNNKSSGPSSSKGRKGSSYTARQ).

It belongs to the DNA photolyase class-1 family. FAD is required as a cofactor. (6R)-5,10-methylene-5,6,7,8-tetrahydrofolate serves as cofactor.

Its function is as follows. May have a photoreceptor function. Has weak cyclobutyl pyrimidine photolyase activity when expressed in E.coli and when tested in vitro. This Danio rerio (Zebrafish) protein is Cryptochrome DASH (cry-dash).